We begin with the raw amino-acid sequence, 97 residues long: Co-chaperonin GroES (97 aa).

It belongs to the GroES chaperonin family. Heptamer of 7 subunits arranged in a ring. Interacts with the chaperonin GroEL.

The protein localises to the cytoplasm. Its function is as follows. Together with the chaperonin GroEL, plays an essential role in assisting protein folding. The GroEL-GroES system forms a nano-cage that allows encapsulation of the non-native substrate proteins and provides a physical environment optimized to promote and accelerate protein folding. GroES binds to the apical surface of the GroEL ring, thereby capping the opening of the GroEL channel. This Proteus mirabilis (strain HI4320) protein is Co-chaperonin GroES.